The primary structure comprises 437 residues: MPIIRKIHARQILDSRGNPTVEVDVYTESSFGRAAVPSGASTGVHEAVELRDGDASVYLGKGVLKAVENVNTIVDEGLRGMLVTEQEEIDRMLLELDGTPNKSKLGANALLGVSLACAKAGAEYSGMSLYRYIGGTMANTLPVPMMNVINGGAHADNTVDFQEFMIMPIGFTSYSDALRCGAEIFHALKALLKSRGLSTAVGDEGGFAPNLTSNEEAIELVVEAIGKAGYKAGSPASKGGLGEGQVMIALDPASSEFYDADKKKYVFKKSDKRELSSEEMAAYWEKWSNDYPIISIEDGMAEDDWAGWKMLTDRIGSRVQLVGDDLFVTNSVRLAEGIEKKVGNSILVKVNQIGTLTETLEAIDLAKRNGYTAVISHRSGETEDSTIAQIAVATNAGQIKTGSMSRSDRMAKYNELLRIEEELGAQAVYPAAKAFRV.

Glutamine 162 lines the (2R)-2-phosphoglycerate pocket. The active-site Proton donor is the glutamate 204. 3 residues coordinate Mg(2+): aspartate 251, glutamate 297, and aspartate 324. Residues lysine 349, arginine 378, serine 379, and lysine 400 each contribute to the (2R)-2-phosphoglycerate site. Residue lysine 349 is the Proton acceptor of the active site.

This sequence belongs to the enolase family. Requires Mg(2+) as cofactor.

It localises to the cytoplasm. It is found in the secreted. The protein localises to the cell surface. The enzyme catalyses (2R)-2-phosphoglycerate = phosphoenolpyruvate + H2O. Its pathway is carbohydrate degradation; glycolysis; pyruvate from D-glyceraldehyde 3-phosphate: step 4/5. In terms of biological role, catalyzes the reversible conversion of 2-phosphoglycerate (2-PG) into phosphoenolpyruvate (PEP). It is essential for the degradation of carbohydrates via glycolysis. This Chlorobium phaeovibrioides (strain DSM 265 / 1930) (Prosthecochloris vibrioformis (strain DSM 265)) protein is Enolase.